A 370-amino-acid polypeptide reads, in one-letter code: GTPase Obg (370 aa).

The region spanning 1 to 159 (MKFVDEAYID…KKLKLELRVL (159 aa)) is the Obg domain. The OBG-type G domain maps to 160–333 (ADVGLLGMPN…LVQAIYQHVA (174 aa)). GTP-binding positions include 166–173 (GMPNAGKS), 191–195 (FTTLH), 213–216 (DVPG), 283–286 (NKLD), and 314–316 (SAL). Mg(2+)-binding residues include Ser173 and Thr193. The disordered stretch occupies residues 346–370 (FAEPEADESDDEPRFAPQADDPRFR).

It belongs to the TRAFAC class OBG-HflX-like GTPase superfamily. OBG GTPase family. In terms of assembly, monomer. Mg(2+) is required as a cofactor.

The protein localises to the cytoplasm. Functionally, an essential GTPase which binds GTP, GDP and possibly (p)ppGpp with moderate affinity, with high nucleotide exchange rates and a fairly low GTP hydrolysis rate. Plays a role in control of the cell cycle, stress response, ribosome biogenesis and in those bacteria that undergo differentiation, in morphogenesis control. This chain is GTPase Obg, found in Methylibium petroleiphilum (strain ATCC BAA-1232 / LMG 22953 / PM1).